The primary structure comprises 166 residues: Ribosome maturation factor RimM (166 aa).

The PRC barrel domain occupies 91–165 (DDEFYHADLI…RIVADPPEGL (75 aa)).

The protein belongs to the RimM family. Binds ribosomal protein uS19.

The protein localises to the cytoplasm. An accessory protein needed during the final step in the assembly of 30S ribosomal subunit, possibly for assembly of the head region. Essential for efficient processing of 16S rRNA. May be needed both before and after RbfA during the maturation of 16S rRNA. It has affinity for free ribosomal 30S subunits but not for 70S ribosomes. The sequence is that of Ribosome maturation factor RimM from Dinoroseobacter shibae (strain DSM 16493 / NCIMB 14021 / DFL 12).